We begin with the raw amino-acid sequence, 108 residues long: UPF0145 protein LGAS_1099 (108 aa).

The protein belongs to the UPF0145 family.

The polypeptide is UPF0145 protein LGAS_1099 (Lactobacillus gasseri (strain ATCC 33323 / DSM 20243 / BCRC 14619 / CIP 102991 / JCM 1131 / KCTC 3163 / NCIMB 11718 / NCTC 13722 / AM63)).